A 549-amino-acid polypeptide reads, in one-letter code: MKNINPTQTSAWQALQKHYDEMKDVTIAELFANDSDRFAKFSATFDDLMLVDFSKNRITEETLAKLQDLAKETDLAGAIKSMFSGEKINRTEDRAVLHVALRNRSNTPIIVDGKDVMPEVNAVLEKMKTFSQAIISGQWKGYTGKAITDVVNIGIGGSDLGPFMVTEALRPYKNHLTMHFVSNVDGTHIAEVLKKVNPETTLFLVASKTFTTQETMTNAHSARDWFLKTAGDEKHVAKHFAALSTNAKAVGEFGIDTANMFEFWDWVGGRYSLWSAIGLSIILSVGFDNFVELLSGAHAMDKHFSTTPAEKNLPILLALIGIWYNNFFGAETEAILPYDQYMHRFAAYFQQGNMESNGKYVDRNGNAVDYQTGPIIWGEPGTNGQHAFYQLIHQGTKMVPCDFIAPAITHNPLSDHHQKLLSNFFAQTEALAFGKSREVVEQEYRDQGKDPAQLEHVVPFKVFEGNRPTNSILLREITPFSLGALIALYEHKIFTQGVILNIFTFDQWGVELGKQLANRILPELGDDKAISSHDSSTNGLINRYKAWRA.

Glu-355 acts as the Proton donor in catalysis. Residues His-386 and Lys-514 contribute to the active site.

The protein belongs to the GPI family.

It localises to the cytoplasm. The enzyme catalyses alpha-D-glucose 6-phosphate = beta-D-fructose 6-phosphate. The protein operates within carbohydrate biosynthesis; gluconeogenesis. Its pathway is carbohydrate degradation; glycolysis; D-glyceraldehyde 3-phosphate and glycerone phosphate from D-glucose: step 2/4. Functionally, catalyzes the reversible isomerization of glucose-6-phosphate to fructose-6-phosphate. This is Glucose-6-phosphate isomerase from Salmonella paratyphi B (strain ATCC BAA-1250 / SPB7).